Here is a 220-residue protein sequence, read N- to C-terminus: MSCGTYKRGSLTFLLVVALAVPVFCQSRTRLKWKTRISTTPEVMVEERALVRNETNNRYVKIYSTRHPKKTAISNATSTIDFEKRKVAIKVRTYVNSQRTEACYLMDPINTHDMTMTVNVIKSRNQTQVIDKTAVMDMVVNSNKLTIDDLKKDYELSRIYKECDKAVVESGLYTIIKGTPSASATSTDPPIDVLGLIPQSGIHSQHIRIHFNTNPQTAPV.

Residues 1–25 (MSCGTYKRGSLTFLLVVALAVPVFC) form the signal peptide.

Nacreous layer of shell (at protein level). Expressed primarily in the mantle with highest level in the mantle pallium and lower level in the mantle edge.

The protein localises to the secreted. This is an uncharacterized protein from Margaritifera margaritifera (Freshwater pearl mussel).